A 377-amino-acid polypeptide reads, in one-letter code: Transmembrane protein 237A (377 aa).

3 stretches are compositionally biased toward basic and acidic residues: residues 1–11 (MCVTSRADKMP), 43–64 (LESRRQSESREPLTPEPHDNPP), and 74–87 (HTFENEGEQQDHPN). A disordered region spans residues 1-124 (MCVTSRADKM…NQSHNELGVE (124 aa)). 4 helical membrane passes run 198–218 (IIGLFSHGFLAGYAVWNIIVV), 239–259 (LAYPAQSLLYLLLAISTVSAF), 273–293 (GFLTLDPAALASFLYFAALIL), and 326–346 (PWIVVNLVVALLVGLAWVFVA).

Belongs to the TMEM237 family.

It is found in the membrane. The protein resides in the cell projection. The protein localises to the cilium. Functionally, component of the transition zone in primary cilia. Required for ciliogenesis. The protein is Transmembrane protein 237A (tmem237a) of Danio rerio (Zebrafish).